Reading from the N-terminus, the 198-residue chain is NADH-quinone oxidoreductase subunit B 1 (198 aa).

Positions 77, 78, 142, and 172 each coordinate [4Fe-4S] cluster.

This sequence belongs to the complex I 20 kDa subunit family. In terms of assembly, NDH-1 is composed of 14 different subunits. Subunits NuoB, C, D, E, F, and G constitute the peripheral sector of the complex. The cofactor is [4Fe-4S] cluster.

The protein localises to the cell inner membrane. It catalyses the reaction a quinone + NADH + 5 H(+)(in) = a quinol + NAD(+) + 4 H(+)(out). Its function is as follows. NDH-1 shuttles electrons from NADH, via FMN and iron-sulfur (Fe-S) centers, to quinones in the respiratory chain. The immediate electron acceptor for the enzyme in this species is believed to be ubiquinone. Couples the redox reaction to proton translocation (for every two electrons transferred, four hydrogen ions are translocated across the cytoplasmic membrane), and thus conserves the redox energy in a proton gradient. The protein is NADH-quinone oxidoreductase subunit B 1 of Rhodopseudomonas palustris (strain ATCC BAA-98 / CGA009).